We begin with the raw amino-acid sequence, 100 residues long: Urease subunit gamma (100 aa).

The protein belongs to the urease gamma subunit family. As to quaternary structure, heterotrimer of UreA (gamma), UreB (beta) and UreC (alpha) subunits. Three heterotrimers associate to form the active enzyme.

Its subcellular location is the cytoplasm. It carries out the reaction urea + 2 H2O + H(+) = hydrogencarbonate + 2 NH4(+). It participates in nitrogen metabolism; urea degradation; CO(2) and NH(3) from urea (urease route): step 1/1. This chain is Urease subunit gamma, found in Pseudomonas aeruginosa (strain UCBPP-PA14).